The primary structure comprises 321 residues: Lipoyl synthase (321 aa).

Positions 68, 73, 79, 94, 98, 101, and 308 each coordinate [4Fe-4S] cluster. The 218-residue stretch at Phe-80–Thr-297 folds into the Radical SAM core domain.

Belongs to the radical SAM superfamily. Lipoyl synthase family. It depends on [4Fe-4S] cluster as a cofactor.

The protein localises to the cytoplasm. The enzyme catalyses [[Fe-S] cluster scaffold protein carrying a second [4Fe-4S](2+) cluster] + N(6)-octanoyl-L-lysyl-[protein] + 2 oxidized [2Fe-2S]-[ferredoxin] + 2 S-adenosyl-L-methionine + 4 H(+) = [[Fe-S] cluster scaffold protein] + N(6)-[(R)-dihydrolipoyl]-L-lysyl-[protein] + 4 Fe(3+) + 2 hydrogen sulfide + 2 5'-deoxyadenosine + 2 L-methionine + 2 reduced [2Fe-2S]-[ferredoxin]. It participates in protein modification; protein lipoylation via endogenous pathway; protein N(6)-(lipoyl)lysine from octanoyl-[acyl-carrier-protein]: step 2/2. Functionally, catalyzes the radical-mediated insertion of two sulfur atoms into the C-6 and C-8 positions of the octanoyl moiety bound to the lipoyl domains of lipoate-dependent enzymes, thereby converting the octanoylated domains into lipoylated derivatives. The polypeptide is Lipoyl synthase (Shewanella pealeana (strain ATCC 700345 / ANG-SQ1)).